A 248-amino-acid polypeptide reads, in one-letter code: Pyridoxine 5'-phosphate synthase (248 aa).

Asn12 lines the 3-amino-2-oxopropyl phosphate pocket. 14–15 (DH) contacts 1-deoxy-D-xylulose 5-phosphate. Arg23 is a 3-amino-2-oxopropyl phosphate binding site. Catalysis depends on His48, which acts as the Proton acceptor. Positions 50 and 55 each coordinate 1-deoxy-D-xylulose 5-phosphate. Glu75 functions as the Proton acceptor in the catalytic mechanism. A 1-deoxy-D-xylulose 5-phosphate-binding site is contributed by Thr105. His196 acts as the Proton donor in catalysis. 3-amino-2-oxopropyl phosphate contacts are provided by residues Gly197 and 218–219 (GH).

This sequence belongs to the PNP synthase family. Homooctamer; tetramer of dimers.

Its subcellular location is the cytoplasm. The catalysed reaction is 3-amino-2-oxopropyl phosphate + 1-deoxy-D-xylulose 5-phosphate = pyridoxine 5'-phosphate + phosphate + 2 H2O + H(+). It participates in cofactor biosynthesis; pyridoxine 5'-phosphate biosynthesis; pyridoxine 5'-phosphate from D-erythrose 4-phosphate: step 5/5. Functionally, catalyzes the complicated ring closure reaction between the two acyclic compounds 1-deoxy-D-xylulose-5-phosphate (DXP) and 3-amino-2-oxopropyl phosphate (1-amino-acetone-3-phosphate or AAP) to form pyridoxine 5'-phosphate (PNP) and inorganic phosphate. The polypeptide is Pyridoxine 5'-phosphate synthase (Pseudomonas aeruginosa (strain LESB58)).